The following is a 304-amino-acid chain: CBY1-interacting BAR domain-containing protein 2 (304 aa).

The tract at residues 6 to 217 (SRDSQVRVME…EKYDLERDLL (212 aa)) is BAR-like.

The protein belongs to the CIBAR family. Homodimer (via BAR-like domain). Heterodimer (via BAR-like domain) with FAM92A. Interacts with CBY1. In terms of tissue distribution, restricted to certain tissues, most prominently expressed in multicilaited tissues.

The protein localises to the cytoplasm. It is found in the cytoskeleton. The protein resides in the microtubule organizing center. It localises to the centrosome. Its subcellular location is the centriole. The protein localises to the cilium basal body. Its function is as follows. May play a role in ciliogenesis. In cooperation with CBY1 may facilitate ciliogenesis likely by the recruitment and fusion of endosomal vesicles at distal appendages during early stages of ciliogenesis. In Homo sapiens (Human), this protein is CBY1-interacting BAR domain-containing protein 2.